Consider the following 413-residue polypeptide: Phosphoglycerate kinase (413 aa).

Substrate contacts are provided by residues 24–26, Arg39, 62–65, Arg123, and Arg165; these read DFN and HLSR. Residues Lys216, Glu343, and 369–372 each bind ATP; that span reads GGDS.

It belongs to the phosphoglycerate kinase family. As to quaternary structure, monomer.

It is found in the cytoplasm. The catalysed reaction is (2R)-3-phosphoglycerate + ATP = (2R)-3-phospho-glyceroyl phosphate + ADP. It functions in the pathway carbohydrate degradation; glycolysis; pyruvate from D-glyceraldehyde 3-phosphate: step 2/5. The chain is Phosphoglycerate kinase from Mycoplasmoides gallisepticum (strain R(low / passage 15 / clone 2)) (Mycoplasma gallisepticum).